Here is a 441-residue protein sequence, read N- to C-terminus: UDP-N-acetylmuramoylalanine--D-glutamate ligase (441 aa).

112 to 118 (GTNGKTT) is a binding site for ATP.

The protein belongs to the MurCDEF family.

The protein localises to the cytoplasm. It catalyses the reaction UDP-N-acetyl-alpha-D-muramoyl-L-alanine + D-glutamate + ATP = UDP-N-acetyl-alpha-D-muramoyl-L-alanyl-D-glutamate + ADP + phosphate + H(+). Its pathway is cell wall biogenesis; peptidoglycan biosynthesis. Its function is as follows. Cell wall formation. Catalyzes the addition of glutamate to the nucleotide precursor UDP-N-acetylmuramoyl-L-alanine (UMA). The sequence is that of UDP-N-acetylmuramoylalanine--D-glutamate ligase from Gloeobacter violaceus (strain ATCC 29082 / PCC 7421).